The following is an 83-amino-acid chain: UPF0297 protein DSY2420 (83 aa).

This sequence belongs to the UPF0297 family.

This is UPF0297 protein DSY2420 from Desulfitobacterium hafniense (strain Y51).